The following is a 345-amino-acid chain: MNNEYKLTKFVQAAGCAAKMGPGDLKQTICHLTPDDERILVGFDTSEDASVYQINESQAIVQTLDFITPVVDDPYIYGQIAAANALSDVFAMGAEVKTAMNIVGFDRKNIPKDALEMILDGGNSKIKECGGVLLGGHTIESPEMYYGLSVTGMIHPNEIIRNNTPKIGHVLVLTKPIGMGILTTAIKRDLLELNLIKDCAKIMASLNYLPSKMMRKYEVSSCTDITGFGLMGHALECTNNSITLNISHNDVPFVKEAFDFASNDVIPGGTRRNMKYVEDKIEFLPNVSDIYKALLCDAQTSGGLLIAMKKDDAKEFIKELEDYSFGYASIIGEVIPRTHKAIIIN.

The active site involves Cys16. ATP is bound by residues Lys19 and 45–47 (TSE). Mg(2+) is bound at residue Asp48. Residues Asp65, Asp88, and 136–138 (GHT) each bind ATP. Asp88 contributes to the Mg(2+) binding site. A Mg(2+)-binding site is contributed by Asp224.

This sequence belongs to the selenophosphate synthase 1 family. Class I subfamily. In terms of assembly, homodimer. The cofactor is Mg(2+).

It carries out the reaction hydrogenselenide + ATP + H2O = selenophosphate + AMP + phosphate + 2 H(+). In terms of biological role, synthesizes selenophosphate from selenide and ATP. This is Selenide, water dikinase from Aliarcobacter butzleri (strain RM4018) (Arcobacter butzleri).